A 252-amino-acid chain; its full sequence is Short chain dehydrogenase andC (252 aa).

An N-terminal signal peptide occupies residues 1–25 (MGFLQDKVVIITGAAAGIGLATATA). Residues isoleucine 11, aspartate 57, and arginine 119 each coordinate NADP(+). Serine 137 functions as the Proton donor in the catalytic mechanism. Positions 151 and 155 each coordinate NADP(+). Tyrosine 151 acts as the Proton acceptor in catalysis. Lysine 155 (lowers pKa of active site Tyr) is an active-site residue.

The protein belongs to the short-chain dehydrogenases/reductases (SDR) family.

It participates in secondary metabolite biosynthesis; terpenoid biosynthesis. Functionally, short chain dehydrogenase; part of the gene cluster that mediates the biosynthesis of anditomin, a fungal meroterpenoid. The first step of the pathway is the synthesis of 3,5-dimethylorsellinic acid (DMOA) by the polyketide synthase andM. DMOA is then converted to the phthalide compound 5,7-dihydroxy-4,6-dimethylphthalide (DHDMP) by the cytochrome P450 monooxygenase andK, which is further prenylated by the prenyltransferase andD to yield farnesyl-DHDMP. Further epoxidation by the FAD-dependent monooxygenase andE leads to epoxyfarnesyl-DHDMP. The next step involves the terpene cyclase andB that converts epoxyfarnesyl-DHDMP into preandiloid A through opening of the epoxide ring followed by the cyclization of the farnesyl moiety. Preandiloid A is in turn oxidized at the C-3 hydroxyl group to yield preandiloid B by the dehydrogenase andC. The dioxygenase andA is solely responsible for the dehydrogenation of preandiloid B leading to the enone preandiloid C, as well as for the intriguing structural rearrangement to generate the bicyclo[2.2.2]octane core, transforming preandiloid C into andiconin. FAD-binding monooxygenase andJ then produces andilesin D which is reduced by dehydrogenase andI to yield andilesin A. Action of acetyltransferase andG followed by a spontaneous acetate elimination leads then to andilesin B, which is in turn substrate of the short chain dehydrogenase andH to yield andilesin C. Finally, the dioxygenase andF catalyzes the transformation of andilesin C to anditomin. The sequence is that of Short chain dehydrogenase andC from Emericella variicolor (Aspergillus stellatus).